The sequence spans 281 residues: Bifunctional protein FolD (281 aa).

NADP(+) contacts are provided by residues Gly-165–Gly-167, Thr-192, and Val-233.

The protein belongs to the tetrahydrofolate dehydrogenase/cyclohydrolase family. Homodimer.

The enzyme catalyses (6R)-5,10-methylene-5,6,7,8-tetrahydrofolate + NADP(+) = (6R)-5,10-methenyltetrahydrofolate + NADPH. It catalyses the reaction (6R)-5,10-methenyltetrahydrofolate + H2O = (6R)-10-formyltetrahydrofolate + H(+). Its pathway is one-carbon metabolism; tetrahydrofolate interconversion. In terms of biological role, catalyzes the oxidation of 5,10-methylenetetrahydrofolate to 5,10-methenyltetrahydrofolate and then the hydrolysis of 5,10-methenyltetrahydrofolate to 10-formyltetrahydrofolate. The sequence is that of Bifunctional protein FolD from Mycobacterium avium (strain 104).